A 487-amino-acid chain; its full sequence is UDP-glucosyl transferase 73CC6 (487 aa).

Catalysis depends on H17, which acts as the Proton acceptor. The active-site Charge relay is the D114. The UDP site is built by S282, W346, A347, H364, N368, S369, E372, and Y386.

Belongs to the UDP-glycosyltransferase family. As to expression, mainly expressed in flowers and flower buds and, to a lesser extent, in leaves, stems and roots.

Its pathway is secondary metabolite biosynthesis; terpenoid biosynthesis. Functionally, component of the oleanane-type triterpene saponins (e.g. saponarioside A and saponarioside B) biosynthetic pathway, leading to the production of natural products with detergent properties used as traditional sources of soap. A glycosyltransferase that mediates the conversion of QA-di to QA-tri via the elongation of the C-3 sugar chain with a D-xylose. The chain is UDP-glucosyl transferase 73CC6 from Saponaria officinalis (Common soapwort).